Reading from the N-terminus, the 170-residue chain is Probable phospholipid hydroperoxide glutathione peroxidase (170 aa).

C44 is a catalytic residue.

Belongs to the glutathione peroxidase family.

The protein resides in the cytoplasm. The enzyme catalyses a hydroperoxy polyunsaturated fatty acid + 2 glutathione = a hydroxy polyunsaturated fatty acid + glutathione disulfide + H2O. Its function is as follows. Protects cells and enzymes from oxidative damage, by catalyzing the reduction of hydrogen peroxide, lipid peroxides and organic hydroperoxide, by glutathione. The sequence is that of Probable phospholipid hydroperoxide glutathione peroxidase (GPXMC1) from Mesembryanthemum crystallinum (Common ice plant).